A 302-amino-acid polypeptide reads, in one-letter code: Quinolinate synthase (302 aa).

The iminosuccinate site is built by H25 and S42. [4Fe-4S] cluster is bound at residue C87. Iminosuccinate-binding positions include Y113–N115 and S130. Residue C172 coordinates [4Fe-4S] cluster. Residues H198–E200 and T215 each bind iminosuccinate. C260 is a binding site for [4Fe-4S] cluster.

It belongs to the quinolinate synthase family. Type 2 subfamily. The cofactor is [4Fe-4S] cluster.

The protein localises to the cytoplasm. The catalysed reaction is iminosuccinate + dihydroxyacetone phosphate = quinolinate + phosphate + 2 H2O + H(+). The protein operates within cofactor biosynthesis; NAD(+) biosynthesis; quinolinate from iminoaspartate: step 1/1. Catalyzes the condensation of iminoaspartate with dihydroxyacetone phosphate to form quinolinate. This chain is Quinolinate synthase, found in Methanoregula boonei (strain DSM 21154 / JCM 14090 / 6A8).